Consider the following 279-residue polypeptide: Proteasome subunit alpha type-1 (279 aa).

Residue tyrosine 103 is modified to Phosphotyrosine. Positions 235 to 249 (HVAIAKENDNDTPRN) are enriched in basic and acidic residues. Residues 235–279 (HVAIAKENDNDTPRNDDDDDRPSPPEEPAAGPRDPEVLVATEQRP) are disordered.

This sequence belongs to the peptidase T1A family. In terms of assembly, the 26S proteasome consists of a 20S proteasome core and two 19S regulatory subunits. The 20S proteasome core is composed of 28 subunits that are arranged in four stacked rings, resulting in a barrel-shaped structure. The two end rings are each formed by seven alpha subunits, and the two central rings are each formed by seven beta subunits. The catalytic chamber with the active sites is on the inside of the barrel. Interacts with PI31.

It localises to the cytoplasm. It is found in the nucleus. Its function is as follows. The proteasome is a multicatalytic proteinase complex which is characterized by its ability to cleave peptides with Arg, Phe, Tyr, Leu, and Glu adjacent to the leaving group at neutral or slightly basic pH. The proteasome has an ATP-dependent proteolytic activity. The sequence is that of Proteasome subunit alpha type-1 (Prosalpha6) from Drosophila melanogaster (Fruit fly).